We begin with the raw amino-acid sequence, 169 residues long: Lipoprotein signal peptidase (169 aa).

3 consecutive transmembrane segments (helical) span residues 1-21 (MPES…LILV), 68-88 (WQRW…VVWL), and 94-114 (HETL…GNLY). Catalysis depends on residues Asp-124 and Asp-143. Residues 135–155 (FFPAFNLADTFITIGAILLAL) traverse the membrane as a helical segment.

This sequence belongs to the peptidase A8 family.

Its subcellular location is the cell inner membrane. The enzyme catalyses Release of signal peptides from bacterial membrane prolipoproteins. Hydrolyzes -Xaa-Yaa-Zaa-|-(S,diacylglyceryl)Cys-, in which Xaa is hydrophobic (preferably Leu), and Yaa (Ala or Ser) and Zaa (Gly or Ala) have small, neutral side chains.. Its pathway is protein modification; lipoprotein biosynthesis (signal peptide cleavage). This protein specifically catalyzes the removal of signal peptides from prolipoproteins. In Ectopseudomonas mendocina (strain ymp) (Pseudomonas mendocina), this protein is Lipoprotein signal peptidase.